The following is a 365-amino-acid chain: DNA replication and repair protein RecF (365 aa).

30–37 (GQNGSGKT) provides a ligand contact to ATP.

Belongs to the RecF family.

Its subcellular location is the cytoplasm. Its function is as follows. The RecF protein is involved in DNA metabolism; it is required for DNA replication and normal SOS inducibility. RecF binds preferentially to single-stranded, linear DNA. It also seems to bind ATP. The protein is DNA replication and repair protein RecF of Shewanella halifaxensis (strain HAW-EB4).